A 279-amino-acid chain; its full sequence is HTH-type transcriptional activator RhaS (279 aa).

One can recognise an HTH araC/xylS-type domain in the interval 175 to 273 (QALLGWLQNN…SQAPKSLRHQ (99 aa)). 2 consecutive DNA-binding regions (H-T-H motif) follow at residues 192-213 (GSLA…KQHT) and 240-263 (ITTI…RKAF).

In terms of assembly, binds DNA as a dimer.

The protein resides in the cytoplasm. Its function is as follows. Activates expression of the rhaBAD and rhaT operons. The chain is HTH-type transcriptional activator RhaS from Pectobacterium carotovorum subsp. carotovorum (strain PC1).